A 676-amino-acid polypeptide reads, in one-letter code: E3 ubiquitin-protein ligase ICP0 (676 aa).

An RING-type zinc finger spans residues 13–52; it reads CCICLDAITGAARALPCLHAFCLACIRRWLEGRPTCPLCK. Disordered regions lie at residues 101–153, 266–517, and 555–676; these read DLTA…GGRA, HLIP…AGAQ, and AAIS…AWRQ. A compositionally biased stretch (gly residues) spans 123 to 153; sequence EAGGGAGGAEEAGEARGAGAGRAAGAAGGRA. A compositionally biased stretch (acidic residues) spans 286-303; sequence SDSDSEGSEDDSWSESEE. The segment covering 304-314 has biased composition (low complexity); that stretch reads SSSGLSTSDLT. Acidic residues predominate over residues 315 to 328; the sequence is AIDDTETEPETDAE. Over residues 351–361 the composition is skewed to polar residues; that stretch reads YVSTRGRQTPA. Composition is skewed to low complexity over residues 375-388 and 397-411; these read GRAA…SSRS and LPAA…QARA. Over residues 422 to 439 the composition is skewed to gly residues; that stretch reads GAGLGVAAGETAGWGAGS. Residues 440–450 are compositionally biased toward basic and acidic residues; that stretch reads EEGRGERRARL. The span at 474-484 shows a compositional bias: pro residues; it reads TPAPAPAPAPA. Residues 555–597 show a composition bias toward low complexity; sequence AAISTRAPTPSPAGRAPAADPRRAGAPALAGAARAEVGRNGNP.

Belongs to the simplexviruses ICp0 family. In terms of processing, auto-ubiquitinated. Transactivation activity is possibly regulated through phosphorylation by casein kinase II.

It carries out the reaction S-ubiquitinyl-[E2 ubiquitin-conjugating enzyme]-L-cysteine + [acceptor protein]-L-lysine = [E2 ubiquitin-conjugating enzyme]-L-cysteine + N(6)-ubiquitinyl-[acceptor protein]-L-lysine.. Its function is as follows. Evades nuclear antiviral defenses triggered by dsDNA viruses. Acts during the initial stages of lytic infection and the reactivation of latent viral genome. Prevents the antiviral effect of nuclear bodies by degrading host PML and SP100. This Bovine herpesvirus 1.1 (strain Cooper) (BoHV-1) protein is E3 ubiquitin-protein ligase ICP0 (BICP0).